Reading from the N-terminus, the 441-residue chain is tRNA pseudouridine synthase Pus10 (441 aa).

The active-site Nucleophile is Asp-268. Substrate-binding residues include Tyr-333 and Tyr-405.

It belongs to the pseudouridine synthase Pus10 family.

The enzyme catalyses uridine(54) in tRNA = pseudouridine(54) in tRNA. It catalyses the reaction uridine(55) in tRNA = pseudouridine(55) in tRNA. Functionally, responsible for synthesis of pseudouridine from uracil-54 and uracil-55 in the psi GC loop of transfer RNAs. The sequence is that of tRNA pseudouridine synthase Pus10 from Thermosphaera aggregans (strain DSM 11486 / M11TL).